The sequence spans 556 residues: Endonuclease/exonuclease/phosphatase family domain-containing protein 1 (556 aa).

In terms of domain architecture, HhH spans 39–68 (ERLNINTATEEELMTLPGVTRQVAQNIVEY).

In Xenopus laevis (African clawed frog), this protein is Endonuclease/exonuclease/phosphatase family domain-containing protein 1 (eepd1).